Reading from the N-terminus, the 170-residue chain is Fimbrial protein (170 aa).

A propeptide spanning residues 1 to 7 is cleaved from the precursor; it reads MNTLQKG. Phe8 carries the post-translational modification N-methylphenylalanine. Residues 8–28 traverse the membrane as a helical segment; that stretch reads FTLIELMIVIAIVGILAAVAL. Residue Ser70 is glycosylated (O-linked (Gal...) serine). Position 100 is an O-(sn-1-glycerophosphoryl)serine (Ser100). Cys127 and Cys163 are joined by a disulfide.

It belongs to the N-Me-Phe pilin family. As to quaternary structure, the pili are polar flexible filaments of about 5.4 nanometers diameter and 2.5 micrometers average length; they consist of only a single polypeptide chain arranged in a helical configuration of five subunits per turn in the assembled pilus. In terms of processing, O-linked glycan consists of GlcNAc-Gal disaccharide.

The protein localises to the fimbrium. It is found in the membrane. Functionally, major component of the type IV pilus (T4P) that plays a role in cellular adherence, microcolony formation as well as twitching motility. This is Fimbrial protein (pilE) from Neisseria meningitidis serogroup A / serotype 4A (strain DSM 15465 / Z2491).